The sequence spans 217 residues: Ribosomal RNA small subunit methyltransferase G (217 aa).

Residues G74, L79, 125-126 (IQ), and R143 each bind S-adenosyl-L-methionine.

It belongs to the methyltransferase superfamily. RNA methyltransferase RsmG family.

It localises to the cytoplasm. The enzyme catalyses guanosine(527) in 16S rRNA + S-adenosyl-L-methionine = N(7)-methylguanosine(527) in 16S rRNA + S-adenosyl-L-homocysteine. Specifically methylates the N7 position of guanine in position 527 of 16S rRNA. The chain is Ribosomal RNA small subunit methyltransferase G from Syntrophotalea carbinolica (strain DSM 2380 / NBRC 103641 / GraBd1) (Pelobacter carbinolicus).